The following is a 211-amino-acid chain: Transcription factor ces-2 (211 aa).

Residues 83–101 are compositionally biased toward low complexity; it reads VSSRSSTVSSSHFSSPQRS. 2 disordered regions span residues 83 to 152 and 184 to 211; these read VSSR…HALE and NSEVSCESNDSTETNDSNDSKSDSTIEV. Residues 111–152 are compositionally biased toward basic and acidic residues; that stretch reads PEEKKDSAYFERRRKNNDAAKRSRDARRQKEEQIASKAHALE. The bZIP domain occupies 116 to 179; that stretch reads DSAYFERRRK…AQLRFLLFSK (64 aa). The segment at 122–140 is basic motif; the sequence is RRRKNNDAAKRSRDARRQK. A leucine-zipper region spans residues 144–172; it reads IASKAHALERENMQLRGKVSSLEQEAAQL. The span at 190–200 shows a compositional bias: low complexity; it reads ESNDSTETNDS. A compositionally biased stretch (basic and acidic residues) spans 201–211; it reads NDSKSDSTIEV.

This sequence belongs to the bZIP family. In terms of assembly, interacts with NFIL3 transcription factor homolog atf-2.

The protein resides in the nucleus. Its function is as follows. Transcription factor. Required to activate programmed cell death in the sister cells of the serotoninergic neurosecretory motor (NSM) neurons. Negatively regulates the activity of ces-1 which in turn negatively regulates the activities of cell-killing genes. Binds to the DNA sequence 5'-RTTACGTAAY-3'. Involved in the development of the excretory duct cell, by positively modulating embryonic transcription of putative transcription factor lin-48, acting in concert with NFIL3 transcription factor homolog atf-2. Positively modulates expression of neuropeptide pigment dispersing factor homologs pdf-1 and pdf-2. This Caenorhabditis elegans protein is Transcription factor ces-2 (ces-2).